A 463-amino-acid chain; its full sequence is DNA polymerase subunit gamma-2, mitochondrial (463 aa).

A mitochondrion-targeting transit peptide spans 1–44 (MLLTLKNTGQLLVAACSKVARSLAKYHPRVNHHRHCVWCSKRGL).

In terms of assembly, heterotrimer composed of a catalytic subunit and a homodimer of accessory subunits.

It localises to the mitochondrion. Mitochondrial polymerase processivity subunit. It regulates the polymerase and exonuclease activities promoting processive DNA synthesis. Binds to ss-DNA. This chain is DNA polymerase subunit gamma-2, mitochondrial (polg2), found in Xenopus laevis (African clawed frog).